The chain runs to 354 residues: Rhodopsin (354 aa).

Residues 1-36 (MNGTEGPYFYIPMVNTTGIVRSPYEYPQYYLVNPAA) lie on the Extracellular side of the membrane. Residues Asn-2 and Asn-15 are each glycosylated (N-linked (GlcNAc...) asparagine). The helical transmembrane segment at 37–61 (YAALGAYMFFLILLGFPINFLTLYV) threads the bilayer. The Cytoplasmic segment spans residues 62 to 73 (TLEHKKLRTPLN). The chain crosses the membrane as a helical span at residues 74–96 (YILLNLAVADLFMVFGGFTTTMY). Topologically, residues 97–110 (TSMHGYFVLGRLGC) are extracellular. Cys-110 and Cys-187 are disulfide-bonded. The helical transmembrane segment at 111-133 (NLEGFFATLGGEIGLWSLVVLAI) threads the bilayer. The 'Ionic lock' involved in activated form stabilization motif lies at 134–136 (ERW). The Cytoplasmic portion of the chain corresponds to 134–152 (ERWVVVCKPISNFRFGENH). Residues 153-173 (AIMGLAFTWIMACACAVPPLV) form a helical membrane-spanning segment. Residues 174–202 (GWSRYIPEGMQCSCGVDYYTRAEGFNNES) are Extracellular-facing. Asn-200 is a glycosylation site (N-linked (GlcNAc...) asparagine). Residues 203-224 (FVVYMFTCHFCIPLTIIGFCYG) traverse the membrane as a helical segment. The Cytoplasmic portion of the chain corresponds to 225–252 (RLLCAVKEAAAAQQESETTQRAEREVTR). The helical transmembrane segment at 253 to 274 (MVILMVVGFLVCWLPYASVAWY) threads the bilayer. Residues 275-286 (IFSNQGSQFGPL) lie on the Extracellular side of the membrane. The helical transmembrane segment at 287–308 (FMTIPAFFAKSSSVYNPMIYIC) threads the bilayer. Lys-296 is modified (N6-(retinylidene)lysine). Residues 309–354 (MNKQFRHCMITTLCCGKNPFEEEEGASTTASKTEASSVSSSSVSPA) are Cytoplasmic-facing. 2 S-palmitoyl cysteine lipidation sites follow: Cys-322 and Cys-323. The tract at residues 333 to 354 (GASTTASKTEASSVSSSSVSPA) is disordered. Over residues 334 to 354 (ASTTASKTEASSVSSSSVSPA) the composition is skewed to low complexity.

It belongs to the G-protein coupled receptor 1 family. Opsin subfamily. In terms of processing, phosphorylated on some or all of the serine and threonine residues present in the C-terminal region. Post-translationally, contains one covalently linked retinal chromophore.

The protein resides in the membrane. The protein localises to the cell projection. It is found in the cilium. It localises to the photoreceptor outer segment. Its function is as follows. Photoreceptor required for image-forming vision at low light intensity. While most salt water fish species use retinal as chromophore, most freshwater fish use 3-dehydroretinal, or a mixture of retinal and 3-dehydroretinal. Light-induced isomerization of 11-cis to all-trans retinal triggers a conformational change that activates signaling via G-proteins. Subsequent receptor phosphorylation mediates displacement of the bound G-protein alpha subunit by arrestin and terminates signaling. This is Rhodopsin (rho) from Salaria pavo (Peacock blenny).